The chain runs to 270 residues: Cyclic pyranopterin monophosphate synthase, mitochondrial (270 aa).

A mitochondrion-targeting transit peptide spans 1–32 (MISTLRRAVFLRRFPAVVSPIKRAFSSRIDDE). Substrate-binding positions include 187–189 (LCH) and 225–226 (ME). The active site involves D240.

It belongs to the MoaC family. In terms of assembly, homohexamer. Abundantly expressed in the roots.

The protein resides in the mitochondrion matrix. The catalysed reaction is (8S)-3',8-cyclo-7,8-dihydroguanosine 5'-triphosphate = cyclic pyranopterin phosphate + diphosphate. Its pathway is cofactor biosynthesis; molybdopterin biosynthesis. Its function is as follows. Catalyzes the conversion of (8S)-3',8-cyclo-7,8-dihydroguanosine 5'-triphosphate to cyclic pyranopterin monophosphate (cPMP). The sequence is that of Cyclic pyranopterin monophosphate synthase, mitochondrial (CNX3) from Arabidopsis thaliana (Mouse-ear cress).